Reading from the N-terminus, the 572-residue chain is Putative acyl-CoA synthetase CCNA_01223 (572 aa).

It belongs to the ATP-dependent AMP-binding enzyme family.

It functions in the pathway lipid metabolism; sphingolipid metabolism. Involved in de novo bacterial ceramide synthesis. The polypeptide is Putative acyl-CoA synthetase CCNA_01223 (Caulobacter vibrioides (strain NA1000 / CB15N) (Caulobacter crescentus)).